The primary structure comprises 692 residues: Elongation factor G (692 aa).

The region spanning 8-282 (AKTRNIGIMA…AVIAYLPSPL (275 aa)) is the tr-type G domain. Residues 17-24 (AHVDAGKT), 81-85 (DTPGH), and 135-138 (NKMD) contribute to the GTP site.

The protein belongs to the TRAFAC class translation factor GTPase superfamily. Classic translation factor GTPase family. EF-G/EF-2 subfamily.

Its subcellular location is the cytoplasm. Catalyzes the GTP-dependent ribosomal translocation step during translation elongation. During this step, the ribosome changes from the pre-translocational (PRE) to the post-translocational (POST) state as the newly formed A-site-bound peptidyl-tRNA and P-site-bound deacylated tRNA move to the P and E sites, respectively. Catalyzes the coordinated movement of the two tRNA molecules, the mRNA and conformational changes in the ribosome. The chain is Elongation factor G (fus) from Streptococcus pyogenes serotype M1.